A 274-amino-acid polypeptide reads, in one-letter code: Bis(5'-nucleosyl)-tetraphosphatase, symmetrical (274 aa).

It belongs to the Ap4A hydrolase family.

It catalyses the reaction P(1),P(4)-bis(5'-adenosyl) tetraphosphate + H2O = 2 ADP + 2 H(+). In terms of biological role, hydrolyzes diadenosine 5',5'''-P1,P4-tetraphosphate to yield ADP. The protein is Bis(5'-nucleosyl)-tetraphosphatase, symmetrical of Shewanella baltica (strain OS155 / ATCC BAA-1091).